The following is a 264-amino-acid chain: N-carbamoylsarcosine amidase (264 aa).

Cys-177 serves as the catalytic Nucleophile. Residues Thr-240 to His-264 form a disordered region.

In terms of assembly, homotetramer. Requires sulfate as cofactor.

The catalysed reaction is N-carbamoylsarcosine + H2O + 2 H(+) = sarcosine + NH4(+) + CO2. It participates in amine and polyamine degradation; creatinine degradation; sarcosine from creatinine: step 3/3. This is N-carbamoylsarcosine amidase from Arthrobacter sp.